A 982-amino-acid polypeptide reads, in one-letter code: Hunchback-like protein (982 aa).

The disordered stretch occupies residues Gln87 to Val194. Basic and acidic residues predominate over residues Pro101–Glu110. Residues His111–Ser132 are compositionally biased toward polar residues. The segment covering Cys142–Glu152 has biased composition (acidic residues). Residues Lys153–Pro175 are compositionally biased toward basic and acidic residues. Over residues Glu176–Pro193 the composition is skewed to polar residues. C2H2-type zinc fingers lie at residues Leu336–His358, His361–His384, Phe538–His560, Leu567–His589, Phe595–His617, Phe623–His647, and Leu734–His756. The tract at residues Lys377–Gly415 is disordered. The disordered stretch occupies residues Glu811–Ala896. Polar residues-rich tracts occupy residues Gly816 to Ser831 and Ser843 to Ser862. Positions Ala863 to Pro875 are enriched in basic and acidic residues. C2H2-type zinc fingers lie at residues Phe929 to His951 and Phe957 to His981.

Belongs to the hunchback C2H2-type zinc-finger protein family. Expressed primarily in ectodermal cells during embryonic and larval development.

It is found in the nucleus. In terms of biological role, required for the late stages of development. Plays a role in the developmental timing of postembryonic hypodermal seam cell fusion events and adult alae production. The chain is Hunchback-like protein from Caenorhabditis elegans.